The chain runs to 230 residues: Early E1A protein (230 aa).

Residues 40 to 48 (PSLHDLFDL) form an interaction with RB1 in competition with E2F1 region. The short motif at 106 to 110 (LLCLE) is the LXCXE motif, interaction with host RB1 element. Residues 145 to 163 (CLRCAYYQEQGENSICGLC) fold into a zinc finger. A disordered region spans residues 189–230 (KPGSRKRSAVTSRGSVESSKRPCLPEPEQTEPLDLSLKPRPQ). A PXDLS motif, CTBP-binding motif is present at residues 220–224 (PLDLS). The Nuclear localization signal signature appears at 226–230 (KPRPQ).

Belongs to the adenoviridae E1A protein family. Interacts with host UBE2I; this interaction interferes with polySUMOylation. Interacts with host RB1; this interaction induces the aberrant dissociation of RB1-E2F1 complex thereby disrupting the activity of RB1 and activating E2F1-regulated genes. Interacts with host ATF7; the interaction enhances ATF7-mediated viral transactivation activity which requires the zinc binding domains of both proteins. Isoform early E1A 32 kDa protein and isoform early E1A 26 kDa protein interact (via N-terminus) with CUL1 and E3 ubiquitin ligase RBX1; these interactions inhibit RBX1-CUL1-dependent elongation reaction of ubiquitin chains and attenuate ubiquitination of SCF(FBXW7) target proteins. Interacts (via PXLXP motif) with host ZMYND11/BS69 (via MYND-type zinc finger); this interaction inhibits E1A mediated transactivation. Interacts with host EP300; this interaction stimulates the acetylation of RB1 by recruiting EP300 and RB1 into a multimeric-protein complex. Interacts with host CTBP1 and CTBP2; this interaction seems to potentiate viral replication. Interacts with host DCAF7. Interacts with host DYRK1A. Interacts with host KPNA4; this interaction allows E1A import into the host nucleus. Interacts with host EP400; this interaction stabilizes MYC. Interacts with host TBP protein; this interaction probably disrupts the TBP-TATA complex.

Its subcellular location is the host nucleus. Functionally, plays a role in viral genome replication by driving entry of quiescent cells into the cell cycle. Stimulation of progression from G1 to S phase allows the virus to efficiently use the cellular DNA replicating machinery to achieve viral genome replication. E1A protein has both transforming and trans-activating activities. Induces the disassembly of the E2F1 transcription factor from RB1 by direct competition for the same binding site on RB1, with subsequent transcriptional activation of E2F1-regulated S-phase genes and of the E2 region of the adenoviral genome. Release of E2F1 leads to the ARF-mediated inhibition of MDM2 and causes TP53/p53 to accumulate because it is not targeted for degradation by MDM2-mediated ubiquitination anymore. This increase in TP53, in turn, would arrest the cell proliferation and direct its death but this effect is counteracted by the viral protein E1B-55K. Inactivation of the ability of RB1 to arrest the cell cycle is critical for cellular transformation, uncontrolled cellular growth and proliferation induced by viral infection. Interaction with RBX1 and CUL1 inhibits ubiquitination of the proteins targeted by SCF(FBXW7) ubiquitin ligase complex, and may be linked to unregulated host cell proliferation. The tumorigenesis-restraining activity of E1A may be related to the disruption of the host CtBP-CtIP complex through the CtBP binding motif. This is Early E1A protein from Canine adenovirus serotype 1 (strain CLL) (CAdV-1).